Consider the following 204-residue polypeptide: Transcriptional regulator GfcR (204 aa).

The protein belongs to the purine/pyrimidine phosphoribosyltransferase family. GfcR subfamily.

The polypeptide is Transcriptional regulator GfcR (Methanoculleus marisnigri (strain ATCC 35101 / DSM 1498 / JR1)).